Consider the following 326-residue polypeptide: Polycomb complex protein BMI-1 (326 aa).

Residues 18 to 57 (CVLCGGYFIDATTIIECLHSFCKTCIVRYLETSKYCPICD) form an RING-type zinc finger. The short motif at 81–95 (KLVPGLFKNEMKRRR) is the Nuclear localization signal element. Residues 162 to 182 (RYLRCPAAMTVMHLRKFLRSK) form an interaction with PHC2 region. Positions 164–228 (LRCPAAMTVM…GPLPLKYRVR (65 aa)) are interaction with E4F1. Residues 236-326 (IGHQREGLSN…INGSSATSSG (91 aa)) form a disordered region. A compositionally biased stretch (low complexity) spans 265–278 (LPSTSSCLPSPSTP). A compositionally biased stretch (polar residues) spans 279 to 310 (VQSPHPQFPHISSTMNGTSSSPGSNHQSSFTN). Residues 315 to 326 (SSINGSSATSSG) show a composition bias toward low complexity.

Component of a PRC1-like complex.

The protein resides in the nucleus. Its subcellular location is the cytoplasm. In terms of biological role, component of a Polycomb group (PcG) multiprotein PRC1-like complex, a complex class required to maintain the transcriptionally repressive state of many genes, including Hox genes, throughout development. PcG PRC1 complex acts via chromatin remodeling and modification of histones; it mediates monoubiquitination of histone H2A 'Lys-119', rendering chromatin heritably changed in its expressibility. In the PRC1-like complex, regulates the E3 ubiquitin-protein ligase activity of RNF2/RING2. The sequence is that of Polycomb complex protein BMI-1 (BMI1) from Gallus gallus (Chicken).